Consider the following 462-residue polypeptide: Bifunctional protein GlmU (462 aa).

The interval 1-230 is pyrophosphorylase; the sequence is MVNKNAIILA…FEESMGVNDR (230 aa). Residues 9 to 12, Lys23, Gln73, 78 to 79, 101 to 103, Gly140, Glu155, Asn170, and Asn228 each bind UDP-N-acetyl-alpha-D-glucosamine; these read LAAG, GT, and SGD. Asp103 contacts Mg(2+). Residue Asn228 coordinates Mg(2+). A linker region spans residues 231-251; it reads VALSQATKVMRQRINTAHMRN. The segment at 252–462 is N-acetyltransferase; it reads GVTLIDPEST…LPVAKDEEWQ (211 aa). UDP-N-acetyl-alpha-D-glucosamine is bound by residues Arg333 and Lys351. The active-site Proton acceptor is His363. UDP-N-acetyl-alpha-D-glucosamine contacts are provided by Tyr366 and Asn377. Acetyl-CoA is bound by residues 386–387, Ser405, Ala423, and Arg440; that span reads NY.

This sequence in the N-terminal section; belongs to the N-acetylglucosamine-1-phosphate uridyltransferase family. The protein in the C-terminal section; belongs to the transferase hexapeptide repeat family. Homotrimer. Requires Mg(2+) as cofactor.

It localises to the cytoplasm. It catalyses the reaction alpha-D-glucosamine 1-phosphate + acetyl-CoA = N-acetyl-alpha-D-glucosamine 1-phosphate + CoA + H(+). The enzyme catalyses N-acetyl-alpha-D-glucosamine 1-phosphate + UTP + H(+) = UDP-N-acetyl-alpha-D-glucosamine + diphosphate. The protein operates within nucleotide-sugar biosynthesis; UDP-N-acetyl-alpha-D-glucosamine biosynthesis; N-acetyl-alpha-D-glucosamine 1-phosphate from alpha-D-glucosamine 6-phosphate (route II): step 2/2. It functions in the pathway nucleotide-sugar biosynthesis; UDP-N-acetyl-alpha-D-glucosamine biosynthesis; UDP-N-acetyl-alpha-D-glucosamine from N-acetyl-alpha-D-glucosamine 1-phosphate: step 1/1. It participates in bacterial outer membrane biogenesis; LPS lipid A biosynthesis. In terms of biological role, catalyzes the last two sequential reactions in the de novo biosynthetic pathway for UDP-N-acetylglucosamine (UDP-GlcNAc). The C-terminal domain catalyzes the transfer of acetyl group from acetyl coenzyme A to glucosamine-1-phosphate (GlcN-1-P) to produce N-acetylglucosamine-1-phosphate (GlcNAc-1-P), which is converted into UDP-GlcNAc by the transfer of uridine 5-monophosphate (from uridine 5-triphosphate), a reaction catalyzed by the N-terminal domain. This chain is Bifunctional protein GlmU, found in Latilactobacillus sakei subsp. sakei (strain 23K) (Lactobacillus sakei subsp. sakei).